A 316-amino-acid chain; its full sequence is MFGFLLLLSLPFILYLVTPKIRKMLSSGVCTSNVQLPGKVAIVTGANTGIGKETAKDLAQRGARVYLACRDVDKGELAAREIQAVTGNSQVFVRKLDLADTKSIRAFAKDFLAEEKHLHLLINNAGVMMCPYSKTADGFEMHIGVNHLGHFLLTHLLLEKLKESAPSRIVNLSSLGHHLGRIHFHNLQGEKFYSAGLAYCHSKLANILFTKELAKRLKGSGVTTYSVHPGTVHSELTRYSSIMRWLWQLFFVFIKTPQEGAQTSLYCALTEGLESLSGSHFSDCQLAWVSYQGRNEIIARRLWDVSCDLLGLPVDW.

Residues 1 to 21 (MFGFLLLLSLPFILYLVTPKI) traverse the membrane as a helical; Signal-anchor for type II membrane protein segment. Residues 22-316 (RKMLSSGVCT…CDLLGLPVDW (295 aa)) lie on the Cytoplasmic side of the membrane. 45-51 (GANTGIG) contacts NADP(+). Lys109 is modified (N6-acetyllysine). Substrate is bound at residue Ser174. Tyr199 acts as the Proton acceptor in catalysis.

It belongs to the short-chain dehydrogenases/reductases (SDR) family. In terms of processing, not glycosylated. In terms of tissue distribution, expressed at high level in liver and testis. Expressed at lower levels in smooth muscle, thymus, submaxillary gland and epididymis. In testis, expression is restricted to pachytene spermatocytes. Also expressed in four layers of the retina, including the outer segment of rods and cones.

The protein resides in the endoplasmic reticulum membrane. The enzyme catalyses all-trans-retinol + NADP(+) = all-trans-retinal + NADPH + H(+). It carries out the reaction 11-cis-retinol + NADP(+) = 11-cis-retinal + NADPH + H(+). It catalyses the reaction 9-cis-retinol + NADP(+) = 9-cis-retinal + NADPH + H(+). The catalysed reaction is 13-cis-retinol + NADP(+) = 13-cis-retinal + NADPH + H(+). The enzyme catalyses a medium-chain primary fatty alcohol + NADP(+) = a medium-chain fatty aldehyde + NADPH + H(+). It carries out the reaction (2E,6Z)-nona-2,6-dien-1-ol + NADP(+) = (2E,6Z)-nona-2,6-dienal + NADPH + H(+). It catalyses the reaction (E)-oct-2-en-1-ol + NADP(+) = (2E)-octenal + NADPH + H(+). The catalysed reaction is (E)-non-2-en-1-ol + NADP(+) = (E)-non-2-enal + NADPH + H(+). The enzyme catalyses heptan-1-ol + NADP(+) = heptanal + NADPH + H(+). It carries out the reaction hexan-1-ol + NADP(+) = hexanal + NADPH + H(+). It catalyses the reaction decan-1-ol + NADP(+) = decanal + NADPH + H(+). The catalysed reaction is nonan-1-ol + NADP(+) = nonanal + NADPH + H(+). The enzyme catalyses octan-1-ol + NADP(+) = octanal + NADPH + H(+). It carries out the reaction (Z)-non-6-en-1-ol + NADP(+) = (Z)-non-6-enal + NADPH + H(+). It functions in the pathway cofactor metabolism; retinol metabolism. Its function is as follows. Retinol dehydrogenase with a clear preference for NADP. Displays high activity towards 9-cis, 11-cis and all-trans-retinol, and to a lesser extent on 13-cis-retinol. Also exhibits reductive activity towards toxic lipid peroxidation products such as medium-chain aldehydes trans-2-nonenal, nonanal, and cis-6-nonenal. Has no dehydrogenase activity towards steroid. Seems to be required for homeostasis of retinol in liver and testis. This Mus musculus (Mouse) protein is Retinol dehydrogenase 11 (Rdh11).